The following is a 144-amino-acid chain: Transcriptional regulator SlyA (144 aa).

Residues 2–135 (ESPLGSDLAR…LIKLIAKLEH (134 aa)) form the HTH marR-type domain. The segment at residues 49–72 (QIQLAKAIGIEQPSLVRTLDQLED) is a DNA-binding region (H-T-H motif).

This sequence belongs to the SlyA family. In terms of assembly, homodimer.

The protein resides in the cytoplasm. Transcription regulator that can specifically activate or repress expression of target genes. Required for virulence and survival in the macrophage environment. Probably activates the transcription of ssrB. Independently of ssrB activation, capable of stimulating the expression of virulence genes found on pathogenicity island 2 (SPI2). Probably activates expression of ispA, xseB genes, and of omp operon. The protein is Transcriptional regulator SlyA of Salmonella typhimurium (strain LT2 / SGSC1412 / ATCC 700720).